The sequence spans 356 residues: Phosphate acyltransferase (356 aa).

It belongs to the PlsX family. In terms of assembly, homodimer. Probably interacts with PlsY.

It localises to the cytoplasm. It catalyses the reaction a fatty acyl-[ACP] + phosphate = an acyl phosphate + holo-[ACP]. It functions in the pathway lipid metabolism; phospholipid metabolism. Its function is as follows. Catalyzes the reversible formation of acyl-phosphate (acyl-PO(4)) from acyl-[acyl-carrier-protein] (acyl-ACP). This enzyme utilizes acyl-ACP as fatty acyl donor, but not acyl-CoA. The chain is Phosphate acyltransferase from Bartonella bacilliformis (strain ATCC 35685 / KC583 / Herrer 020/F12,63).